The following is a 186-amino-acid chain: Peptide deformylase (186 aa).

Fe cation is bound by residues cysteine 99 and histidine 141. Glutamate 142 is an active-site residue. Histidine 145 lines the Fe cation pocket.

It belongs to the polypeptide deformylase family. Fe(2+) is required as a cofactor.

It carries out the reaction N-terminal N-formyl-L-methionyl-[peptide] + H2O = N-terminal L-methionyl-[peptide] + formate. Its function is as follows. Removes the formyl group from the N-terminal Met of newly synthesized proteins. Requires at least a dipeptide for an efficient rate of reaction. N-terminal L-methionine is a prerequisite for activity but the enzyme has broad specificity at other positions. The sequence is that of Peptide deformylase from Chlamydia pneumoniae (Chlamydophila pneumoniae).